The sequence spans 274 residues: 3-methyl-2-oxobutanoate hydroxymethyltransferase (274 aa).

Mg(2+) contacts are provided by Asp-49 and Asp-88. 3-methyl-2-oxobutanoate contacts are provided by residues 49–50 (DS), Asp-88, and Lys-118. Mg(2+) is bound at residue Glu-120. Glu-187 (proton acceptor) is an active-site residue.

It belongs to the PanB family. As to quaternary structure, homodecamer; pentamer of dimers. It depends on Mg(2+) as a cofactor.

It is found in the cytoplasm. It carries out the reaction 3-methyl-2-oxobutanoate + (6R)-5,10-methylene-5,6,7,8-tetrahydrofolate + H2O = 2-dehydropantoate + (6S)-5,6,7,8-tetrahydrofolate. Its pathway is cofactor biosynthesis; (R)-pantothenate biosynthesis; (R)-pantoate from 3-methyl-2-oxobutanoate: step 1/2. In terms of biological role, catalyzes the reversible reaction in which hydroxymethyl group from 5,10-methylenetetrahydrofolate is transferred onto alpha-ketoisovalerate to form ketopantoate. The sequence is that of 3-methyl-2-oxobutanoate hydroxymethyltransferase from Rhodopseudomonas palustris (strain HaA2).